Reading from the N-terminus, the 1400-residue chain is DNA-directed RNA polymerase subunit beta' (1400 aa).

Zn(2+) contacts are provided by Cys-71, Cys-73, Cys-86, and Cys-89. The Mg(2+) site is built by Asp-462, Asp-464, and Asp-466. Residues Cys-820, Cys-893, Cys-900, and Cys-903 each contribute to the Zn(2+) site.

It belongs to the RNA polymerase beta' chain family. The RNAP catalytic core consists of 2 alpha, 1 beta, 1 beta' and 1 omega subunit. When a sigma factor is associated with the core the holoenzyme is formed, which can initiate transcription. It depends on Mg(2+) as a cofactor. The cofactor is Zn(2+).

It catalyses the reaction RNA(n) + a ribonucleoside 5'-triphosphate = RNA(n+1) + diphosphate. DNA-dependent RNA polymerase catalyzes the transcription of DNA into RNA using the four ribonucleoside triphosphates as substrates. The protein is DNA-directed RNA polymerase subunit beta' of Methylobacterium sp. (strain 4-46).